We begin with the raw amino-acid sequence, 350 residues long: MSKNKLSKGQQRRVNANHQRRLKTSAEKADYDDNLFGEPAEGIVISRFGMHADVESADGEVHRCNIRRTIRSLVTGDRVVWRPGKAAAEGVNVKGIVEAVHERTSVLTRPDFYDGVKPIAANIDQIVIVSAILPELSLNIIDRYLVGCETLQVEPLIVLNKIDLLDDEGMDFVNEQMNIYRNIGYRVLMVSSHTQDGLKPLEEALTGRISIFAGQSGVGKSSLLNALLGLQNEILTNDVSNVSGLGQHTTTAARLYHFPHGGDVIDSPGVREFGLWHLEPEQITQGFVEFHDYLGHCKYRDCKHDADPGCAIREAVENGAIAETRFENYHRILESMAQVKTRKNFSDTDD.

Residues methionine 1 to asparagine 17 are compositionally biased toward polar residues. Residues methionine 1 to glutamate 27 form a disordered region. The CP-type G domain occupies threonine 104 to phenylalanine 273. Residues asparagine 160–aspartate 163 and glycine 214–serine 222 contribute to the GTP site. The Zn(2+) site is built by cysteine 297, cysteine 302, histidine 304, and cysteine 310.

This sequence belongs to the TRAFAC class YlqF/YawG GTPase family. RsgA subfamily. Monomer. Associates with 30S ribosomal subunit, binds 16S rRNA. It depends on Zn(2+) as a cofactor.

It localises to the cytoplasm. One of several proteins that assist in the late maturation steps of the functional core of the 30S ribosomal subunit. Helps release RbfA from mature subunits. May play a role in the assembly of ribosomal proteins into the subunit. Circularly permuted GTPase that catalyzes slow GTP hydrolysis, GTPase activity is stimulated by the 30S ribosomal subunit. This chain is Small ribosomal subunit biogenesis GTPase RsgA, found in Salmonella typhi.